Here is a 158-residue protein sequence, read N- to C-terminus: Snaclec agglucetin subunit alpha-2 (158 aa).

An N-terminal signal peptide occupies residues 1 to 23 (MGRFIFVSFGLLVVFLSLSGTGA). Cystine bridges form between Cys-27–Cys-38, Cys-55–Cys-152, and Cys-127–Cys-144. The C-type lectin domain occupies 34–153 (YDQYCYQVIK…CIQLNPFVCK (120 aa)).

The protein belongs to the snaclec family. In terms of assembly, heterotetramer of the subunits alpha-1, alpha-2, beta-1 and beta-2; disulfide-linked. As to expression, expressed by the venom gland.

It is found in the secreted. In terms of biological role, agglucetin specifically causes platelet aggregation and surface exposure of integrin alpha-IIb/beta-3 with a GPIb-(GP1BA-) dependent manner in washed platelets. It binds to human platelets in a saturable manner, and its binding is specifically blocked by anti-GP Ib mAb. It regulates endothelial cell survival and promotes angiogenesis by activating integrin alpha-v/beta-3 signaling through FAK/phosphatidylinositol 3-kinase (PI3K)/Akt pathway. This is Snaclec agglucetin subunit alpha-2 from Deinagkistrodon acutus (Hundred-pace snake).